The chain runs to 331 residues: Elongation factor Ts, mitochondrial (331 aa).

Residues 254-295 (SPLTVGEMPEVREEEGEKKDGDKQDEEERSTDSDEDETQMLR) form a disordered region. The segment covering 262–275 (PEVREEEGEKKDGD) has biased composition (basic and acidic residues). The span at 276-291 (KQDEEERSTDSDEDET) shows a compositional bias: acidic residues.

This sequence belongs to the EF-Ts family.

It localises to the mitochondrion. Its function is as follows. Associates with the EF-Tu.GDP complex and induces the exchange of GDP to GTP. It remains bound to the aminoacyl-tRNA.EF-Tu.GTP complex up to the GTP hydrolysis stage on the ribosome. The polypeptide is Elongation factor Ts, mitochondrial (Branchiostoma floridae (Florida lancelet)).